The chain runs to 130 residues: Ribonuclease VapC4 (130 aa).

Residues Leu7 to Ile130 form the PINc domain. The Mg(2+) site is built by Asp9 and Asp98.

It belongs to the PINc/VapC protein family. In terms of assembly, interacts with cognate antitoxin VapB4. Mg(2+) serves as cofactor.

It is found in the secreted. Toxic component of a type II toxin-antitoxin (TA) system. Probably exerts its toxic effect by binding to mRNA, inhibiting translation. Binds to, recognizes and cleaves ssRNA at ACGC and AC(A/U)GC sequences, usually between the G and C; cleavage is not very efficient, nor is cleavage required to inhibit protein synthesis. Upon expression in situ, in M.smegmatis or E.coli inhibits cell growth and colony formation; in at least E.coli also causes increased levels of cellular RNA. Its toxic effect is neutralized by coexpression with cognate antitoxin VapB4. In Mycobacterium tuberculosis (strain ATCC 25618 / H37Rv), this protein is Ribonuclease VapC4.